The following is a 1121-amino-acid chain: Potassium channel subfamily U member 1 (1121 aa).

Over 1 to 24 (MSQTLLDSLNQKELTETSCTIEIQ) the chain is Extracellular. A helical transmembrane segment spans residues 25-45 (AAFILSSLATFFGGLIILFLF). At 46–101 (RIALKSSRSWKYVKGPRGLLELFSSRRIEANPLRKLYFHGVFRQRIEMLLSAQTVV) the chain is on the cytoplasmic side. The chain crosses the membrane as a helical span at residues 102-122 (GQVLVILVFVLSIGSLVIYFI). The Extracellular portion of the chain corresponds to 123 to 137 (NSMDPVRRCSSYEDK). The helical transmembrane segment at 138–158 (IVHVDLSFNAFFSFYFGLRFW) threads the bilayer. At 159–165 (AAEDKIK) the chain is on the cytoplasmic side. A helical membrane pass occupies residues 166–186 (FWLEMNSIVDIFTIPPTFISY). Over 187–188 (YL) the chain is Extracellular. The helical; Voltage-sensor transmembrane segment at 189-209 (KSNWLGLRFLRALRLLELPKI) threads the bilayer. The Cytoplasmic segment spans residues 210-226 (LQILQVIKTSNSVKLSK). The chain crosses the membrane as a helical span at residues 227–247 (LLSIVISTWFTAAGFLHLVEN). Residues 248-259 (SGDPWLNGRNSQ) are Extracellular-facing. Residues 260–282 (TMSYFESIYLVTATMSTVGFGDV) constitute an intramembrane region (pore-forming). Positions 276–279 (TVGF) match the Selectivity for potassium motif. At 283 to 290 (VAKTSLGR) the chain is on the extracellular side. Residues 291 to 311 (IFIVFFTLGSLILFANYIPEM) traverse the membrane as a helical segment. Over 312 to 1121 (VELFSTRKKY…LDASDIVQEK (810 aa)) the chain is Cytoplasmic. RCK N-terminal domains are found at residues 331–473 (KKFI…DNIL) and 718–889 (QNHI…DGML). 2 disordered regions span residues 836 to 858 (SPTP…KERK) and 1052 to 1076 (DSSP…GSNF).

Belongs to the potassium channel family. Calcium-activated (TC 1.A.1.3) subfamily. KCa5.1/KCNU1 sub-subfamily. As to quaternary structure, homotetramer; which constitutes the calcium-activated potassium channel. Interact with LRRC52; this interaction changes some channel gating properties, such as shifting gating to more negative potentials at a given pH. In terms of tissue distribution, testis-specific. Mainly expressed in spermatocytes. Expressed in testis, brain, eye and kidney.

It is found in the cell membrane. The protein localises to the cytoplasm. The enzyme catalyses K(+)(in) = K(+)(out). With respect to regulation, regulated by changes in cytosolic pH; activated by alkalization. In contrast to human KCNU1 is not activated by Ca(2+) or Mg(2+). The auxiliary subunit LRRC52 shifts the activation of KCNU1 to more negative potentials at a given pH. Its function is as follows. Testis-specific potassium channel activated by both intracellular pH and membrane voltage that mediates export of K(+). Represents the primary spermatozoan K(+) current. The channel underlies a pH-triggered membrane hyperpolarization during the process of sperm capacitation, as sperm encounter the alkaline environment near the ovum in the female reproductive tract, thereby playing an essential for male fertility. This is Potassium channel subfamily U member 1 (Kcnu1) from Mus musculus (Mouse).